The chain runs to 205 residues: Outer-membrane lipoprotein LolB (205 aa).

The signal sequence occupies residues 1–17 (MFLRHVIVFSLIALLTG). A lipid anchor (N-palmitoyl cysteine) is attached at cysteine 18. The S-diacylglycerol cysteine moiety is linked to residue cysteine 18.

This sequence belongs to the LolB family. In terms of assembly, monomer.

Its subcellular location is the cell outer membrane. Functionally, plays a critical role in the incorporation of lipoproteins in the outer membrane after they are released by the LolA protein. This Pseudomonas syringae pv. syringae (strain B728a) protein is Outer-membrane lipoprotein LolB.